The primary structure comprises 399 residues: 4-hydroxyphenylpyruvate dioxygenase (399 aa).

2 VOC domains span residues 23–166 and 197–355; these read GYDH…LIER and RIDH…LFTK. Fe cation is bound by residues His200, His283, and Glu366.

This sequence belongs to the 4HPPD family. Fe cation is required as a cofactor.

It carries out the reaction 3-(4-hydroxyphenyl)pyruvate + O2 = homogentisate + CO2. Its pathway is amino-acid degradation; L-phenylalanine degradation; acetoacetate and fumarate from L-phenylalanine: step 3/6. The chain is 4-hydroxyphenylpyruvate dioxygenase (TCRP) from Coccidioides posadasii (strain C735) (Valley fever fungus).